Here is a 430-residue protein sequence, read N- to C-terminus: MAFEFRLPDIGEGIHEGEIVKWFVKAGDTIEEDDVLAEVQNDKSVVEIPSPVSGTVEEVMVEEGTVAVVGDVIVKIDAPDAEDMQFKGHDDDSSSKEEPAKEEAPAEQAPVATQTEEVDENRTVKAMPSVRKYAREKGVNIKAVSGSGKNGRITKEDVDAYLNGGAPTASNESADSATNEEVAETPAAPAAVSLEGDFPETTEKIPAMRRAIAKAMVNSKHTAPHVTLMDEIDVQALWDHRKKFKEIAAEQGTKLTFLPYVVKALVSALKKYPALNTSFNEEAGEIVHKHYWNIGIAADTDRGLLVPVVKHADRKSIFQISDEINELAVKARDGKLTADEMKGATCTISNIGSAGGQWFTPVINHPEVAILGIGRIAQKPIVKDGEIVAAPVLALSLSFDHRQIDGATGQNAMNHIKRLLNNPELLLMEG.

In terms of domain architecture, Lipoyl-binding spans 2-77 (AFEFRLPDIG…VVGDVIVKID (76 aa)). Lys-43 bears the N6-lipoyllysine mark. The disordered stretch occupies residues 80 to 122 (DAEDMQFKGHDDDSSSKEEPAKEEAPAEQAPVATQTEEVDENR). The span at 84–104 (MQFKGHDDDSSSKEEPAKEEA) shows a compositional bias: basic and acidic residues. The Peripheral subunit-binding (PSBD) domain maps to 125-162 (KAMPSVRKYAREKGVNIKAVSGSGKNGRITKEDVDAYL). Residues 164–200 (GGAPTASNESADSATNEEVAETPAAPAAVSLEGDFPE) are disordered. The span at 177-192 (ATNEEVAETPAAPAAV) shows a compositional bias: low complexity. The active site involves His-401.

It belongs to the 2-oxoacid dehydrogenase family. As to quaternary structure, forms a 24-polypeptide structural core with octahedral symmetry. (R)-lipoate is required as a cofactor.

It catalyses the reaction N(6)-[(R)-dihydrolipoyl]-L-lysyl-[protein] + acetyl-CoA = N(6)-[(R)-S(8)-acetyldihydrolipoyl]-L-lysyl-[protein] + CoA. Functionally, the pyruvate dehydrogenase complex catalyzes the overall conversion of pyruvate to acetyl-CoA and CO(2). It contains multiple copies of three enzymatic components: pyruvate dehydrogenase (E1), dihydrolipoamide acetyltransferase (E2) and lipoamide dehydrogenase (E3). This is Dihydrolipoyllysine-residue acetyltransferase component of pyruvate dehydrogenase complex (pdhC) from Staphylococcus aureus.